A 319-amino-acid polypeptide reads, in one-letter code: MSTSNGTIVEIELPCKLSTCDANLLQRCEGRVLFLPFVRARVLLKDVDYKSFYIAGTEPDTLSLLSTFKTRFAAVITRALPGRMSAVVLGMGSIPNGLALQNTGPFDLCNGDTVCLMPPIFPNVCCRIRLESIDTELLFPVTVPTRLANEILAKTLSRAIEAIGRGQMPPPTSRESETIMYNGRSYTISPTLHSLDAAESTVRTLLLNMIFAINEGNMILYTMIPTLLTLGASDGYINALVGLETATRAVGQLIRIPNPPPLQDAWRRYPVYEALSAWITMTLNLGNVLSLHPLLKVCTFDGPANIKAGDLCPVIANWY.

Belongs to the herpesviridae TRX2 protein family. As to quaternary structure, interacts with TRX1 and major capisd protein/MCP.

It is found in the virion. It localises to the host nucleus. Its function is as follows. Structural component of the T=16 icosahedral capsid. The capsid is composed of pentamers and hexamers of major capsid protein/MCP, which are linked together by heterotrimers called triplexes. These triplexes are formed by a single molecule of triplex protein 1/TRX1 and two copies of triplex protein 2/TRX2. Additionally, TRX1 is required for efficient transport of TRX2 to the nucleus, which is the site of capsid assembly. The polypeptide is Triplex capsid protein 2 (Gallid herpesvirus 2 (strain Chicken/Md5/ATCC VR-987) (GaHV-2)).